Reading from the N-terminus, the 762-residue chain is FAST kinase domain-containing protein 5, mitochondrial (762 aa).

S95 is modified (phosphoserine). Residue K506 is modified to N6-acetyllysine. In terms of domain architecture, RAP spans 695–755 (LAIQFTNKNQ…RLEKLAYLHE (61 aa)).

The protein belongs to the FAST kinase family. In terms of assembly, found in a complex with GRSF1, DDX28, DHX30 and FASTKD2. Associates with the 12S mitochondrial rRNA (12S mt-rRNA). In terms of tissue distribution, expression detected in spleen, testis, colon, heart, smooth muscle, kidney, brain, lung, liver, brown and white adipose tissue.

The protein localises to the mitochondrion matrix. Its subcellular location is the mitochondrion nucleoid. Its function is as follows. Plays an important role in the processing of non-canonical mitochondrial mRNA precursors. This Mus musculus (Mouse) protein is FAST kinase domain-containing protein 5, mitochondrial (Fastkd5).